The primary structure comprises 379 residues: Epoxyqueuosine reductase (379 aa).

Aspartate 140 serves as the catalytic Proton donor. The 31-residue stretch at 184-214 folds into the 4Fe-4S ferredoxin-type domain; that stretch reads FEPDTPASDLCGSCNQCVKACPTGSLLGEGK. Positions 194, 197, 200, 204, 220, 246, 249, and 253 each coordinate [4Fe-4S] cluster. The stretch at 307-332 is one HEAT-like PBS-type repeat; sequence QRNAIIILARYKDKTAVPDLIDCLQN.

This sequence belongs to the QueG family. Monomer. Cob(II)alamin serves as cofactor. Requires [4Fe-4S] cluster as cofactor.

The protein resides in the cytoplasm. The catalysed reaction is epoxyqueuosine(34) in tRNA + AH2 = queuosine(34) in tRNA + A + H2O. It functions in the pathway tRNA modification; tRNA-queuosine biosynthesis. In terms of biological role, catalyzes the conversion of epoxyqueuosine (oQ) to queuosine (Q), which is a hypermodified base found in the wobble positions of tRNA(Asp), tRNA(Asn), tRNA(His) and tRNA(Tyr). The chain is Epoxyqueuosine reductase from Listeria monocytogenes serovar 1/2a (strain ATCC BAA-679 / EGD-e).